We begin with the raw amino-acid sequence, 130 residues long: Small ribosomal subunit protein uS9 (130 aa).

Belongs to the universal ribosomal protein uS9 family.

This chain is Small ribosomal subunit protein uS9, found in Aster yellows witches'-broom phytoplasma (strain AYWB).